Consider the following 985-residue polypeptide: MDAPPPTKPPRGVKYGKDESAGCGFLVNVIKSLGFSETTEERQKEKQKIEAEFKRSDLRLNELVSRHDQQLTQVLPLFSQVSSEVTASRERIHAVKENLGVCKRLLQCRRDELRKMWMDAVQHKYVLEMLEQIQELRKVPQRVVGYTAKRQYLHASKALTDALTTLNGPLQAVEGLSDLRTDLQTRRQQLYQRLHEELVTQVYTNSANEALSSFQRTNSSRLNSSFTRGIGARRSTDRIEANARVRKALAEMAQSFDLDKAEVIEDADLIYPELSMSYFVAIIVESFGMLHKVPDSLETLRVQIQTELLNVVRHTTHQLSVSGATADTNPLLSLLEVIFKQFKAIAKTHSLLLKNYLSVGQKYSVVGPQPYDLTDFWAQAQSVLQLLLTDYLDIQNAAADESAQTGFSEPTSNINSYFLRRKVPSTKRSMFKFDKSSHVGTSNNSDAFKEHRRNASDASVDDNLAGQLGGSGKGSTSGLFPHEKKQREKILICTPDQSIITKVYLPLMGYIKEIENFMKCKPGQPCSLHDFLDNYIKDTFLTKGHNRNLQLTIESLSKNQDAWRTIISPEEIKALNLSRPLLQSTVMVERRLMETKNLIQDLPCYSEDLLKMVCALLKAYREICQAAYRGIVQPDSEDKRIYSVAWLKDEDISRFLKTLPNWTDLKTYSQKSRHNRKLHRGSFEPSEEESPLQVQQRNIREAEMLTSNLGEGGITQQEILVEISVLKELAILQESMEWFSCRVSEFANDLRRPLVNGLNAVPAECGADIAVKDGTIKVMTNLALEFDELANTCLLVLHLEVRVQCFHYLRSKSSVRTNSYVGSKDDILEPDRQVQVLTKRLSEMDEAFSATLHPRKTRYIFEGLAHLASRILIQASNYLEHIDQITVQRMCRNAIALQQTLSNITASREVALDQARHFYELLCMEPDEILNALLERGTQFSEMQLLNALQLSCKSFGITDANLLASYQQKLSDILGAKPSKGVVV.

Residues 36 to 70 adopt a coiled-coil conformation; that stretch reads SETTEERQKEKQKIEAEFKRSDLRLNELVSRHDQQ. 5 positions are modified to phosphoserine: Ser235, Ser456, Ser459, Ser682, and Ser686. Positions 434–480 are disordered; sequence DKSSHVGTSNNSDAFKEHRRNASDASVDDNLAGQLGGSGKGSTSGLF.

Belongs to the SEC8 family. The exocyst complex is composed of Sec3/Exoc1, Sec5/Exoc2, Sec6/Exoc3, Sec8/Exoc4, Sec10/Exoc5, Sec15/Exoc6, exo70/Exoc7 and Exo84/Exoc8. As to expression, abundant in the embryonic and larval glutamatergic neuromuscular junctions (NMJs), pre and postsynaptically.

In terms of biological role, component of the exocyst complex involved in the docking of exocytic vesicles with fusion sites on the plasma membrane. Involved in regulation of synaptic microtubule formation, and also regulation of synaptic growth and glutamate receptor trafficking. Does not appear to be required for basal neurotransmission. This chain is Exocyst complex component 4, found in Drosophila melanogaster (Fruit fly).